Reading from the N-terminus, the 207-residue chain is Transcription antitermination protein NusB (207 aa).

It belongs to the NusB family.

Involved in transcription antitermination. Required for transcription of ribosomal RNA (rRNA) genes. Binds specifically to the boxA antiterminator sequence of the ribosomal RNA (rrn) operons. This Trichodesmium erythraeum (strain IMS101) protein is Transcription antitermination protein NusB.